The chain runs to 987 residues: Mediator of RNA polymerase II transcription subunit 24 (987 aa).

6 consecutive short sequence motifs (LXXLL motif) follow at residues 128–132 (LHWLL), 344–348 (LTPLL), 446–450 (LDLLL), 555–559 (LVALL), 786–790 (LPGLL), and 855–859 (LMRLL). A phosphoserine mark is found at Ser860 and Ser871.

It belongs to the Mediator complex subunit 24 family. Component of the Mediator complex, which is composed of MED1, MED4, MED6, MED7, MED8, MED9, MED10, MED11, MED12, MED13, MED13L, MED14, MED15, MED16, MED17, MED18, MED19, MED20, MED21, MED22, MED23, MED24, MED25, MED26, MED27, MED29, MED30, MED31, CCNC, CDK8 and CDC2L6/CDK11. The MED12, MED13, CCNC and CDK8 subunits form a distinct module termed the CDK8 module. Mediator containing the CDK8 module is less active than Mediator lacking this module in supporting transcriptional activation. Individual preparations of the Mediator complex lacking one or more distinct subunits have been variously termed ARC, CRSP, DRIP, PC2, SMCC and TRAP. Interacts with AR. Interacts with MED1 and MED10. As to expression, expressed in the adrenal gland, brain, epididymis, heart, kidney, liver, ovary, pancreas, prostate, skeletal muscle, small intestine, spleen, stomach, testis and thymus.

It is found in the nucleus. In terms of biological role, component of the Mediator complex, a coactivator involved in the regulated transcription of nearly all RNA polymerase II-dependent genes. Mediator functions as a bridge to convey information from gene-specific regulatory proteins to the basal RNA polymerase II transcription machinery. Mediator is recruited to promoters by direct interactions with regulatory proteins and serves as a scaffold for the assembly of a functional preinitiation complex with RNA polymerase II and the general transcription factors. Required for basal and activator-dependent transcription. The protein is Mediator of RNA polymerase II transcription subunit 24 (Med24) of Mus musculus (Mouse).